Here is a 344-residue protein sequence, read N- to C-terminus: Selenide, water dikinase (344 aa).

C16 is a catalytic residue. Residues K19 and 47-49 (SRD) each bind ATP. D50 is a binding site for Mg(2+). ATP-binding positions include D67, D90, and 138–140 (GHS). Mg(2+) is bound at residue D90. D226 contacts Mg(2+).

Belongs to the selenophosphate synthase 1 family. Class I subfamily. Homodimer. Mg(2+) serves as cofactor.

It catalyses the reaction hydrogenselenide + ATP + H2O = selenophosphate + AMP + phosphate + 2 H(+). Its function is as follows. Synthesizes selenophosphate from selenide and ATP. This Pseudomonas aeruginosa (strain ATCC 15692 / DSM 22644 / CIP 104116 / JCM 14847 / LMG 12228 / 1C / PRS 101 / PAO1) protein is Selenide, water dikinase.